The sequence spans 306 residues: Ornithine carbamoyltransferase (306 aa).

Carbamoyl phosphate contacts are provided by residues 50–53, Gln-77, Arg-101, and 128–131; these read STRT and HPCQ. L-ornithine-binding positions include Asn-160, Asp-224, and 228–229; that span reads SM. Residues 261 to 262 and Arg-289 contribute to the carbamoyl phosphate site; that span reads CL.

It belongs to the aspartate/ornithine carbamoyltransferase superfamily. OTCase family.

It localises to the cytoplasm. It catalyses the reaction carbamoyl phosphate + L-ornithine = L-citrulline + phosphate + H(+). The protein operates within amino-acid biosynthesis; L-arginine biosynthesis; L-arginine from L-ornithine and carbamoyl phosphate: step 1/3. Functionally, reversibly catalyzes the transfer of the carbamoyl group from carbamoyl phosphate (CP) to the N(epsilon) atom of ornithine (ORN) to produce L-citrulline. The polypeptide is Ornithine carbamoyltransferase (Aquifex aeolicus (strain VF5)).